An 86-amino-acid polypeptide reads, in one-letter code: Cell division topological specificity factor (86 aa).

It belongs to the MinE family.

Functionally, prevents the cell division inhibition by proteins MinC and MinD at internal division sites while permitting inhibition at polar sites. This ensures cell division at the proper site by restricting the formation of a division septum at the midpoint of the long axis of the cell. This Bordetella petrii (strain ATCC BAA-461 / DSM 12804 / CCUG 43448) protein is Cell division topological specificity factor.